A 390-amino-acid polypeptide reads, in one-letter code: Flagellar P-ring protein (390 aa).

Residues 1–25 (MLLKKIFLTGIIVLDLVFFVSYGFA) form the signal peptide.

It belongs to the FlgI family. The basal body constitutes a major portion of the flagellar organelle and consists of four rings (L,P,S, and M) mounted on a central rod.

It localises to the periplasm. Its subcellular location is the bacterial flagellum basal body. Its function is as follows. Assembles around the rod to form the L-ring and probably protects the motor/basal body from shearing forces during rotation. This is Flagellar P-ring protein from Syntrophus aciditrophicus (strain SB).